The following is a 319-amino-acid chain: Malate dehydrogenase (319 aa).

NAD(+)-binding positions include 7-13 and Asp34; that span reads GAAGGIG. Substrate is bound by residues Arg81 and Arg87. NAD(+)-binding positions include Asn94 and 117 to 119; that span reads ITN. Substrate is bound by residues Asn119 and Arg153. His177 serves as the catalytic Proton acceptor. Residue Met227 participates in NAD(+) binding.

Belongs to the LDH/MDH superfamily. MDH type 1 family. As to quaternary structure, homodimer.

The catalysed reaction is (S)-malate + NAD(+) = oxaloacetate + NADH + H(+). Catalyzes the reversible oxidation of malate to oxaloacetate. This Psychromonas ingrahamii (strain DSM 17664 / CCUG 51855 / 37) protein is Malate dehydrogenase.